The chain runs to 131 residues: Small ribosomal subunit protein uS8 (131 aa).

Belongs to the universal ribosomal protein uS8 family. As to quaternary structure, part of the 30S ribosomal subunit. Contacts proteins S5 and S12.

One of the primary rRNA binding proteins, it binds directly to 16S rRNA central domain where it helps coordinate assembly of the platform of the 30S subunit. The chain is Small ribosomal subunit protein uS8 from Malacoplasma penetrans (strain HF-2) (Mycoplasma penetrans).